We begin with the raw amino-acid sequence, 444 residues long: CRAL-TRIO domain-containing protein C3H8.02 (444 aa).

Ser40 carries the post-translational modification Phosphoserine. Thr43 is modified (phosphothreonine). At Ser81 the chain carries Phosphoserine. Residues 171-330 (DDDFVRQLRI…EFGGPNPWRY (160 aa)) form the CRAL-TRIO domain. The residue at position 418 (Thr418) is a Phosphothreonine.

The polypeptide is CRAL-TRIO domain-containing protein C3H8.02 (Schizosaccharomyces pombe (strain 972 / ATCC 24843) (Fission yeast)).